A 147-amino-acid chain; its full sequence is Lipoprotein signal peptidase (147 aa).

4 helical membrane-spanning segments follow: residues 10–30, 34–54, 59–79, and 87–107; these read ISIF…IKFL, GIVK…GTAF, FLGS…LVYM, and WFIY…RLIY. Residues Asp112 and Asp130 contribute to the active site. A helical transmembrane segment spans residues 121–141; that stretch reads LHWPAFNVADSAISIGIVLFV.

Belongs to the peptidase A8 family.

The protein localises to the cell inner membrane. It catalyses the reaction Release of signal peptides from bacterial membrane prolipoproteins. Hydrolyzes -Xaa-Yaa-Zaa-|-(S,diacylglyceryl)Cys-, in which Xaa is hydrophobic (preferably Leu), and Yaa (Ala or Ser) and Zaa (Gly or Ala) have small, neutral side chains.. It participates in protein modification; lipoprotein biosynthesis (signal peptide cleavage). Its function is as follows. This protein specifically catalyzes the removal of signal peptides from prolipoproteins. The protein is Lipoprotein signal peptidase of Thermodesulfovibrio yellowstonii (strain ATCC 51303 / DSM 11347 / YP87).